We begin with the raw amino-acid sequence, 588 residues long: Peptidoglycan D,D-transpeptidase FtsI (588 aa).

Residues 19 to 39 form a helical membrane-spanning segment; that stretch reads FISWRFALLCGCILLALAFLL. S307 functions as the Acyl-ester intermediate in the catalytic mechanism. A propeptide spanning residues 578–588 is cleaved from the precursor; the sequence is INQGEGTGGRS.

Belongs to the transpeptidase family. FtsI subfamily.

It is found in the cell inner membrane. The enzyme catalyses Preferential cleavage: (Ac)2-L-Lys-D-Ala-|-D-Ala. Also transpeptidation of peptidyl-alanyl moieties that are N-acyl substituents of D-alanine.. The protein operates within cell wall biogenesis; peptidoglycan biosynthesis. Its function is as follows. Catalyzes cross-linking of the peptidoglycan cell wall at the division septum. The protein is Peptidoglycan D,D-transpeptidase FtsI of Escherichia coli O157:H7.